Here is a 270-residue protein sequence, read N- to C-terminus: tRNA pseudouridine synthase A (270 aa).

Residue D60 is the Nucleophile of the active site. Residue Y118 participates in substrate binding.

This sequence belongs to the tRNA pseudouridine synthase TruA family. Homodimer.

It catalyses the reaction uridine(38/39/40) in tRNA = pseudouridine(38/39/40) in tRNA. Its function is as follows. Formation of pseudouridine at positions 38, 39 and 40 in the anticodon stem and loop of transfer RNAs. The chain is tRNA pseudouridine synthase A from Salmonella typhimurium (strain LT2 / SGSC1412 / ATCC 700720).